A 306-amino-acid chain; its full sequence is Arylesterase (306 aa).

Positions 82-84 (HGG) match the Involved in the stabilization of the negatively charged intermediate by the formation of the oxyanion hole motif. Active-site residues include Ser-156, Asp-251, and His-281.

Monomer.

The enzyme catalyses a phenyl acetate + H2O = a phenol + acetate + H(+). It catalyses the reaction An aryl dialkyl phosphate + H2O = dialkyl phosphate + an aryl alcohol.. Its activity is regulated as follows. Completely inhibited by chemical modifiers that are specific to Cys (HgCl(2) and p-chloromercuribenzoic acid), His (diethyl pyrocarbonate) and Ser (diisopropyl fluorophosphate and phenylmethanesulfonyl fluoride). No significant effect with chemical modifiers specific to Lys (pyridoxal 5'-phosphate) and Arg (phenylglyoxal). Not inhibited by inhibitors of A-esterases (paraoxon) or C-esterases (physostigmine/eserine). Activity is also not effected by incubation with 5 mM divalent cations for 30 minutes at 30 degrees Celsius or with 10 mM EDTA for 60 minutes at 75 degrees Celsius. Has a broad substrate specificity. Hydrolyzes various p-nitrophenyl phosphates, aromatic esters and p-nitrophenyl fatty acids in vitro. Most active against paraoxon, phenyl acetate and p-nitrophenyl caproate (C6), respectively. Also has tributyrinase activity, but shows no hydrolytic activity toward other triacylglycerols including tricaprylin, trimyristin, tripalmitin or triolein in vitro. In Saccharolobus solfataricus (Sulfolobus solfataricus), this protein is Arylesterase.